The sequence spans 451 residues: NADH-quinone oxidoreductase subunit D (451 aa).

This sequence belongs to the complex I 49 kDa subunit family. NDH-1 is composed of 14 different subunits. Subunits NuoB, C, D, E, F, and G constitute the peripheral sector of the complex.

It localises to the cell inner membrane. The catalysed reaction is a quinone + NADH + 5 H(+)(in) = a quinol + NAD(+) + 4 H(+)(out). In terms of biological role, NDH-1 shuttles electrons from NADH, via FMN and iron-sulfur (Fe-S) centers, to quinones in the respiratory chain. The immediate electron acceptor for the enzyme in this species is believed to be a menaquinone. Couples the redox reaction to proton translocation (for every two electrons transferred, four hydrogen ions are translocated across the cytoplasmic membrane), and thus conserves the redox energy in a proton gradient. This Salinibacter ruber (strain DSM 13855 / M31) protein is NADH-quinone oxidoreductase subunit D.